Reading from the N-terminus, the 264-residue chain is Matrilysin (264 aa).

The signal sequence occupies residues 1 to 17 (MQLTLFCFVCLLPGHLA). Residues 18 to 94 (LPLSQEAGDV…PRCGVPDVAE (77 aa)) constitute a propeptide, activation peptide. The Cysteine switch motif lies at 85–92 (PRCGVPDV). Cys87 provides a ligand contact to Zn(2+). Asp153 contributes to the Ca(2+) binding site. Zn(2+)-binding residues include His163 and Asp165. Ca(2+)-binding residues include Asp170, Gly171, Gly173, and Thr175. His178 is a Zn(2+) binding site. Ca(2+)-binding residues include Gly185, Gly187, and Asp189. His191 lines the Zn(2+) pocket. Positions 193 and 196 each coordinate Ca(2+). His214 serves as a coordination point for Zn(2+). Glu215 is a catalytic residue. Residues His218 and His224 each coordinate Zn(2+).

This sequence belongs to the peptidase M10A family. Requires Ca(2+) as cofactor. Zn(2+) serves as cofactor. In terms of tissue distribution, expressed in the intestinal epithelium (at protein level).

The protein resides in the secreted. The protein localises to the extracellular space. It is found in the extracellular matrix. It carries out the reaction Cleavage of 14-Ala-|-Leu-15 and 16-Tyr-|-Leu-17 in B chain of insulin. No action on collagen types I, II, IV, V. Cleaves gelatin chain alpha2(I) &gt; alpha1(I).. Functionally, degrades casein, gelatins of types I, III, IV, and V, and fibronectin. Activates procollagenase. In terms of biological role, may play a role in tissue reorganization. The sequence is that of Matrilysin (Mmp7) from Mus musculus (Mouse).